A 241-amino-acid polypeptide reads, in one-letter code: DnaA regulatory inactivator Hda (241 aa).

It belongs to the DnaA family. HdA subfamily. In terms of assembly, the active form seems to be an ADP-bound monomer. Forms the RIDA complex (regulatory inactivation of DnaA) of ATP-DnaA, ADP-Hda and the DNA-loaded beta sliding clamp (dnaN).

Mediates the interaction of DNA replication initiator protein DnaA with DNA polymerase subunit beta sliding clamp (dnaN). Stimulates hydrolysis of ATP-DnaA to ADP-DnaA, rendering DnaA inactive for reinitiation, a process called regulatory inhibition of DnaA or RIDA. In Salmonella arizonae (strain ATCC BAA-731 / CDC346-86 / RSK2980), this protein is DnaA regulatory inactivator Hda.